A 392-amino-acid polypeptide reads, in one-letter code: O-phospho-L-seryl-tRNA:Cys-tRNA synthase 1 (392 aa).

Pyridoxal 5'-phosphate-binding positions include 85 to 86 (AR), N190, and 213 to 215 (SGH). K216 carries the post-translational modification N6-(pyridoxal phosphate)lysine.

The protein belongs to the SepCysS family. Homodimer. Interacts with SepRS. Requires pyridoxal 5'-phosphate as cofactor.

The catalysed reaction is O-phospho-L-seryl-tRNA(Cys) + hydrogen sulfide + H(+) = L-cysteinyl-tRNA(Cys) + phosphate. Functionally, converts O-phospho-L-seryl-tRNA(Cys) (Sep-tRNA(Cys)) to L-cysteinyl-tRNA(Cys) (Cys-tRNA(Cys)). The polypeptide is O-phospho-L-seryl-tRNA:Cys-tRNA synthase 1 (Methanoregula boonei (strain DSM 21154 / JCM 14090 / 6A8)).